The sequence spans 219 residues: Ras-like protein 1 (219 aa).

Residue Gly-15–Ser-22 coordinates GTP. The Effector region signature appears at Tyr-37–Tyr-45. GTP is bound by residues Asp-62–Gln-66 and Asn-121–Asp-124. Cys-216 carries the post-translational modification Cysteine methyl ester. A lipid anchor (S-farnesyl cysteine) is attached at Cys-216. A propeptide spans Val-217–Cys-219 (removed in mature form).

Belongs to the small GTPase superfamily. Ras family. As to quaternary structure, scd1, scd2, cdc42, and ras1, in its GTP-bound state, act cooperatively to form a protein complex. In terms of processing, palmitoylated by the erf2-erf4 complex.

It is found in the cell membrane. The catalysed reaction is GTP + H2O = GDP + phosphate + H(+). Alternates between an inactive form bound to GDP and an active form bound to GTP. Activated by a guanine nucleotide-exchange factor (GEF) and inactivated by a GTPase-activating protein (GAP). Participates in the process of sexual differentiation and the determination of cell shape. Essential for mating and for recognition of the mating pheromone, but not for vegetative growth. Does not regulate the intracellular cAMP level. Regulates two downstream pathways, namely the byr2/byr1/spk1 mitogen-activated protein kinase cascade and the cdc42 small G protein pathway. The former is relevant to mating and sporulation, whereas the latter is relevant to mating, cell growth and cell morphology. This is Ras-like protein 1 (ras1) from Schizosaccharomyces pombe (strain 972 / ATCC 24843) (Fission yeast).